The primary structure comprises 348 residues: MO25-like protein At2g03410 (348 aa).

The protein belongs to the Mo25 family.

The sequence is that of MO25-like protein At2g03410 from Arabidopsis thaliana (Mouse-ear cress).